Reading from the N-terminus, the 111-residue chain is uncharacterized protein (111 aa).

The helical transmembrane segment at 81 to 101 (YFFLLFYVSFPHIFLGLFFFI) threads the bilayer.

The protein localises to the membrane. This is an uncharacterized protein from Schizosaccharomyces pombe (strain 972 / ATCC 24843) (Fission yeast).